We begin with the raw amino-acid sequence, 119 residues long: MKENRIRKNAEFRRVYRKGKSFSNRLLVLYVYKNYILKDINRIGISVSKKVGKSVVRSRVKRLIGESYRLNSSNLKKGHDFVIIARTACNGKRYSDIEDSIKNLFNKAGLVIYDEKNIT.

This sequence belongs to the RnpA family. In terms of assembly, consists of a catalytic RNA component (M1 or rnpB) and a protein subunit.

The enzyme catalyses Endonucleolytic cleavage of RNA, removing 5'-extranucleotides from tRNA precursor.. In terms of biological role, RNaseP catalyzes the removal of the 5'-leader sequence from pre-tRNA to produce the mature 5'-terminus. It can also cleave other RNA substrates such as 4.5S RNA. The protein component plays an auxiliary but essential role in vivo by binding to the 5'-leader sequence and broadening the substrate specificity of the ribozyme. This Clostridium acetobutylicum (strain ATCC 824 / DSM 792 / JCM 1419 / IAM 19013 / LMG 5710 / NBRC 13948 / NRRL B-527 / VKM B-1787 / 2291 / W) protein is Ribonuclease P protein component.